We begin with the raw amino-acid sequence, 272 residues long: Regulatory protein RecX (272 aa).

This sequence belongs to the RecX family.

The protein resides in the cytoplasm. In terms of biological role, modulates RecA activity. In Oceanobacillus iheyensis (strain DSM 14371 / CIP 107618 / JCM 11309 / KCTC 3954 / HTE831), this protein is Regulatory protein RecX.